We begin with the raw amino-acid sequence, 1197 residues long: Neural cell adhesion molecule L1.1 (1197 aa).

Ig-like C2-type domains lie at 1–58, 69–160, 165–263, 268–355, and 360–442; these read EFRQ…TAVS, PSLA…EPMS, PSNS…YTVT, PYWT…THVH, and PAQI…KSIS. At 1–1054 the chain is on the extracellular side; the sequence is EFRQRDPSPS…SPRNFATEGW (1054 aa). The cysteines at positions 92 and 143 are disulfide-linked. 8 N-linked (GlcNAc...) asparagine glycosylation sites follow: asparagine 135, asparagine 149, asparagine 221, asparagine 298, asparagine 414, asparagine 421, asparagine 438, and asparagine 449. 3 disulfide bridges follow: cysteine 199–cysteine 247, cysteine 289–cysteine 339, and cysteine 383–cysteine 432. The 91-residue stretch at 451–541 folds into the Ig-like C2-type 6 domain; the sequence is TKIVGPPQNL…DSDTASGYIT (91 aa). Cysteines 472 and 525 form a disulfide. Fibronectin type-III domains lie at 548 to 643, 645 to 742, 747 to 852, 853 to 952, and 953 to 1048; these read PPQS…TPAA, PDTN…SGED, APSA…TPEG, APGP…LLDG, and EPPS…SPRN. The span at 630–640 shows a compositional bias: polar residues; that stretch reads APTESSLSYST. Residues 630–655 are disordered; sequence APTESSLSYSTPAAKPDTNPENVMTL. N-linked (GlcNAc...) asparagine glycosylation occurs at asparagine 708. N-linked (GlcNAc...) asparagine glycosylation is found at asparagine 959, asparagine 968, asparagine 1002, and asparagine 1027. The helical transmembrane segment at 1055–1075 threads the bilayer; the sequence is FIGLISALVLLLLVLLLLCYI. Over 1076 to 1197 the chain is Cytoplasmic; it reads KKSKGGKYSV…TSVTGILGPN (122 aa). Disordered regions lie at residues 1115–1135 and 1154–1197; these read MEKC…SNDS and IGQY…LGPN.

It belongs to the immunoglobulin superfamily. L1/neurofascin/NgCAM family. Expressed in postmitotic neurons in 16-36 hours embryos, including those in the brain, cranial ganglia and otic and olfactory placodes, and in all classes of spinal neurons.

It is found in the cell membrane. It localises to the cell projection. Its subcellular location is the growth cone. Its function is as follows. Cell adhesion molecule with an important role in the development of the nervous system. Involved in neuron-neuron adhesion, neurite fasciculation, outgrowth of neurites, etc. Binds to axonin on neurons. This is Neural cell adhesion molecule L1.1 (nadl1.1) from Danio rerio (Zebrafish).